A 560-amino-acid polypeptide reads, in one-letter code: Interferon alpha/beta receptor 1 (560 aa).

Residues 1-24 (MLGLLGATTLMLVAGAPWVLPAGG) form the signal peptide. Over 25–437 (ADLRSPENVV…EKTKPGSTSQ (413 aa)) the chain is Extracellular. Fibronectin type-III domains follow at residues 29-125 (SPEN…FQEA), 133-224 (HLEA…INTT), 231-329 (SPEN…TEMQ), and 333-433 (FPPV…TKPG). An N-linked (GlcNAc...) asparagine glycan is attached at asparagine 55. Cysteine 76 and cysteine 84 are joined by a disulfide. N-linked (GlcNAc...) asparagine glycans are attached at residues asparagine 85, asparagine 108, and asparagine 172. Cysteine 199 and cysteine 220 are disulfide-bonded. 3 N-linked (GlcNAc...) asparagine glycosylation sites follow: asparagine 222, asparagine 249, and asparagine 254. Cysteine 283 and cysteine 291 are disulfide-bonded. N-linked (GlcNAc...) asparagine glycans are attached at residues asparagine 313, asparagine 377, and asparagine 417. An intrachain disulfide couples cysteine 404 to cysteine 427. Residues 438 to 458 (AWLIAGILSAILLFPAVFYGV) traverse the membrane as a helical segment. At 459-560 (KVVSRCINYV…GEEILRQAAV (102 aa)) the chain is on the cytoplasmic side. Cysteine 464 carries the S-palmitoyl cysteine lipid modification. Tyrosine 467 and tyrosine 482 each carry phosphotyrosine; by TYK2. An important for interaction with TYK2 region spans residues 492 to 501 (LLSTSEEQTE). Phosphoserine is present on residues serine 496 and serine 536. Residues 520–560 (QIDDNHSRCSSQTNRDSGVYSNEDENSGSKIGEEILRQAAV) form a disordered region. A compositionally biased stretch (polar residues) spans 527–539 (RCSSQTNRDSGVY). Over residues 550–560 (IGEEILRQAAV) the composition is skewed to basic and acidic residues.

The protein belongs to the type II cytokine receptor family. As to quaternary structure, heterodimer with IFNAR2; forming the receptor for type I interferon. Interacts with TYK2. Interacts with STAT1 and STAT2; the interaction requires its phosphorylation at Tyr-482. Interacts (serine-phosphorylated form) with FBXW11, the substrate recognition component of a SCF (SKP1-CUL1-F-box protein) E3 ubiquitin-protein ligase complex. Interacts with SHMT2; this promotes interaction with ABRAXAS2 and the BRISC complex. Interacts with TRIM10; this interaction prevents association between IFNAR1 and TYK2. Post-translationally, ubiquitinated, leading to its internalization and degradation. Polyubiquitinated via 'Lys-48'-linked and 'Lys-63'-linked ubiquitin chains, leading to receptor internalization and lysosomal degradation. The 'Lys-63'-linked ubiquitin chains are cleaved off by the BRISC complex. In terms of processing, phosphorylated on tyrosine residues in response to interferon-binding: phosphorylation by TYK2 tyrosine kinase creates docking sites for STAT proteins. Phosphorylated on serine residues in response to interferon binding; this promotes interaction with FBXW11 and ubiquitination. Palmitoylation at Cys-464 is required for the activation of STAT1 and STAT2.

It localises to the cell membrane. It is found in the late endosome. The protein localises to the lysosome. Its function is as follows. Together with IFNAR2, forms the heterodimeric receptor for type I interferons (including interferons alpha, beta, epsilon, omega and kappa). Type I interferon binding activates the JAK-STAT signaling cascade, resulting in transcriptional activation or repression of interferon-regulated genes that encode the effectors of the interferon response. Mechanistically, type I interferon-binding brings the IFNAR1 and IFNAR2 subunits into close proximity with one another, driving their associated Janus kinases (JAKs) (TYK2 bound to IFNAR1 and JAK1 bound to IFNAR2) to cross-phosphorylate one another. The activated kinases phosphorylate specific tyrosine residues on the intracellular domains of IFNAR1 and IFNAR2, forming docking sites for the STAT transcription factors. STAT proteins are then phosphorylated by the JAKs, promoting their translocation into the nucleus to regulate expression of interferon-regulated genes. Can also act independently of IFNAR2: form an active IFNB1 receptor by itself and activate a signaling cascade that does not involve activation of the JAK-STAT pathway. The sequence is that of Interferon alpha/beta receptor 1 (IFNAR1) from Sus scrofa (Pig).